Reading from the N-terminus, the 333-residue chain is Tetraacyldisaccharide 4'-kinase (333 aa).

55 to 62 (SVGGNGKT) lines the ATP pocket.

Belongs to the LpxK family.

The enzyme catalyses a lipid A disaccharide + ATP = a lipid IVA + ADP + H(+). It participates in glycolipid biosynthesis; lipid IV(A) biosynthesis; lipid IV(A) from (3R)-3-hydroxytetradecanoyl-[acyl-carrier-protein] and UDP-N-acetyl-alpha-D-glucosamine: step 6/6. Transfers the gamma-phosphate of ATP to the 4'-position of a tetraacyldisaccharide 1-phosphate intermediate (termed DS-1-P) to form tetraacyldisaccharide 1,4'-bis-phosphate (lipid IVA). In Aeromonas hydrophila subsp. hydrophila (strain ATCC 7966 / DSM 30187 / BCRC 13018 / CCUG 14551 / JCM 1027 / KCTC 2358 / NCIMB 9240 / NCTC 8049), this protein is Tetraacyldisaccharide 4'-kinase.